Reading from the N-terminus, the 160-residue chain is Cytochrome b6-f complex subunit 4 (160 aa).

3 consecutive transmembrane segments (helical) span residues 36–56 (IFYM…GLAV), 96–116 (LGVL…FIKI), and 131–151 (TVFL…ALPI).

This sequence belongs to the cytochrome b family. PetD subfamily. In terms of assembly, the 4 large subunits of the cytochrome b6-f complex are cytochrome b6, subunit IV (17 kDa polypeptide, petD), cytochrome f and the Rieske protein, while the 4 small subunits are petG, petL, petM and petN. The complex functions as a dimer.

The protein resides in the plastid. The protein localises to the chloroplast thylakoid membrane. Its function is as follows. Component of the cytochrome b6-f complex, which mediates electron transfer between photosystem II (PSII) and photosystem I (PSI), cyclic electron flow around PSI, and state transitions. The polypeptide is Cytochrome b6-f complex subunit 4 (Auxenochlorella protothecoides (Green microalga)).